Here is a 386-residue protein sequence, read N- to C-terminus: Succinyl-diaminopimelate desuccinylase (386 aa).

His-72 contacts Zn(2+). Residue Asp-74 is part of the active site. Asp-105 lines the Zn(2+) pocket. The active-site Proton acceptor is the Glu-139. Positions 140, 168, and 353 each coordinate Zn(2+).

The protein belongs to the peptidase M20A family. DapE subfamily. Homodimer. Requires Zn(2+) as cofactor. Co(2+) is required as a cofactor.

The catalysed reaction is N-succinyl-(2S,6S)-2,6-diaminopimelate + H2O = (2S,6S)-2,6-diaminopimelate + succinate. It participates in amino-acid biosynthesis; L-lysine biosynthesis via DAP pathway; LL-2,6-diaminopimelate from (S)-tetrahydrodipicolinate (succinylase route): step 3/3. In terms of biological role, catalyzes the hydrolysis of N-succinyl-L,L-diaminopimelic acid (SDAP), forming succinate and LL-2,6-diaminopimelate (DAP), an intermediate involved in the bacterial biosynthesis of lysine and meso-diaminopimelic acid, an essential component of bacterial cell walls. This chain is Succinyl-diaminopimelate desuccinylase, found in Rhodospirillum centenum (strain ATCC 51521 / SW).